The following is a 615-amino-acid chain: Extracellular metalloproteinase 1 (615 aa).

Positions 1 to 8 (SLPLHVLA) are cleaved as a signal peptide. Residues 9–235 (HPQPSTSTSL…VHNVVDYVAH (227 aa)) constitute a propeptide that is removed on maturation. N-linked (GlcNAc...) asparagine glycosylation is present at N276. H419 serves as a coordination point for Zn(2+). The active site involves E420. A Zn(2+)-binding site is contributed by H423. N-linked (GlcNAc...) asparagine glycans are attached at residues N464, N583, and N612.

The protein belongs to the peptidase M36 family. Requires Zn(2+) as cofactor.

The protein resides in the secreted. In terms of biological role, secreted metalloproteinase probably acting as a virulence factor. This is Extracellular metalloproteinase 1 (MEP1) from Trichophyton equinum (Horse ringworm fungus).